Here is a 450-residue protein sequence, read N- to C-terminus: Tol-Pal system protein TolB (450 aa).

Residues 1-47 form the signal peptide; that stretch reads MRKLWAPNWLSAKRHHANQAATRLIGRHALMAWLAAALALSAGAAQA.

Belongs to the TolB family. The Tol-Pal system is composed of five core proteins: the inner membrane proteins TolA, TolQ and TolR, the periplasmic protein TolB and the outer membrane protein Pal. They form a network linking the inner and outer membranes and the peptidoglycan layer.

The protein resides in the periplasm. In terms of biological role, part of the Tol-Pal system, which plays a role in outer membrane invagination during cell division and is important for maintaining outer membrane integrity. The chain is Tol-Pal system protein TolB from Cupriavidus pinatubonensis (strain JMP 134 / LMG 1197) (Cupriavidus necator (strain JMP 134)).